Consider the following 383-residue polypeptide: 8-amino-7-oxononanoate synthase (383 aa).

Arg-21 contacts substrate. 108–109 lines the pyridoxal 5'-phosphate pocket; sequence GY. Substrate is bound at residue His-133. Positions 179, 207, and 233 each coordinate pyridoxal 5'-phosphate. Lys-236 is modified (N6-(pyridoxal phosphate)lysine). Residue Thr-350 participates in substrate binding.

Belongs to the class-II pyridoxal-phosphate-dependent aminotransferase family. BioF subfamily. Homodimer. Pyridoxal 5'-phosphate serves as cofactor.

The enzyme catalyses 6-carboxyhexanoyl-[ACP] + L-alanine + H(+) = (8S)-8-amino-7-oxononanoate + holo-[ACP] + CO2. It functions in the pathway cofactor biosynthesis; biotin biosynthesis. Catalyzes the decarboxylative condensation of pimeloyl-[acyl-carrier protein] and L-alanine to produce 8-amino-7-oxononanoate (AON), [acyl-carrier protein], and carbon dioxide. This is 8-amino-7-oxononanoate synthase from Yersinia pseudotuberculosis serotype O:1b (strain IP 31758).